Here is a 254-residue protein sequence, read N- to C-terminus: MNILKRKTPQNIRFGEQKPKYYFHIRAFAVLLGVFFLLGVYFNWQSILEKMDDKPISAFALVGQNTFTTADDIKESLLKMGELKGFWGQDVAPIQEQIEALPWVKGAIVRKMWPNRLSIWVSEYQPVAFWNQNQFVTLDGIVFQLPSVRLTAKNLPYLGGPDYQSLKVIETWNQIYINLKSNNIMAKGINIDDRGAWQVQLDNDIVLKLGRGDWKSKLERFVTIYPQIDVPENKKIDYIDLRYTAGAAVGMVDR.

The Cytoplasmic portion of the chain corresponds to 1–27 (MNILKRKTPQNIRFGEQKPKYYFHIRA). Residues 28-48 (FAVLLGVFFLLGVYFNWQSIL) form a helical membrane-spanning segment. The Periplasmic segment spans residues 49 to 254 (EKMDDKPISA…AGAAVGMVDR (206 aa)). Residues 54-124 (KPISAFALVG…NRLSIWVSEY (71 aa)) enclose the POTRA domain.

The protein belongs to the FtsQ/DivIB family. FtsQ subfamily. As to quaternary structure, part of a complex composed of FtsB, FtsL and FtsQ.

It is found in the cell inner membrane. Essential cell division protein. May link together the upstream cell division proteins, which are predominantly cytoplasmic, with the downstream cell division proteins, which are predominantly periplasmic. May control correct divisome assembly. The polypeptide is Cell division protein FtsQ (Haemophilus influenzae (strain ATCC 51907 / DSM 11121 / KW20 / Rd)).